Reading from the N-terminus, the 252-residue chain is Nuclease C1 (252 aa).

His-87 (proton acceptor) is an active-site residue. Asn-119 serves as a coordination point for Mg(2+).

The protein belongs to the DNA/RNA non-specific endonuclease family. Mg(2+) is required as a cofactor. The cofactor is Mn(2+).

The protein resides in the secreted. Functionally, this enzyme has both RNase and DNase activity. This is Nuclease C1 (NUC1CE) from Cunninghamella echinulata var. echinulata.